Here is a 533-residue protein sequence, read N- to C-terminus: (E)-beta-farnesene synthase (533 aa).

Mg(2+) is bound by residues aspartate 286, aspartate 290, asparagine 430, serine 434, and glutamate 438. The DDXXD motif signature appears at aspartate 286–aspartate 290.

The protein belongs to the terpene synthase family. The cofactor is Mg(2+). Co(2+) serves as cofactor. Requires Mn(2+) as cofactor.

It is found in the cytoplasm. It catalyses the reaction (2E,6E)-farnesyl diphosphate = (E)-beta-farnesene + diphosphate. It functions in the pathway secondary metabolite biosynthesis; terpenoid biosynthesis. Sesquiterpene cyclase catalyzing the production of beta-farnesene and alpha-bergamotene in equal amounts from farnesyl diphosphate. Involved in indirect defense by producing volatile signals attracting natural enemies of herbivores. This Zea mays subsp. huehuetenangensis (San Antonio Huista teosinte) protein is (E)-beta-farnesene synthase.